The chain runs to 260 residues: Carbonic anhydrase 3 (260 aa).

Ala2 carries the N-acetylalanine modification. The Alpha-carbonic anhydrase domain maps to 3 to 259; sequence KEWGYASHNG…IKGRVVRASF (257 aa). A phosphoserine mark is found at Ser29, Ser43, Ser48, Ser50, and Ser55. The tract at residues 64–67 is involved in proton transfer; it reads KTCR. The residue at position 73 (Thr73) is a Phosphothreonine. Positions 94, 96, and 119 each coordinate Zn(2+). Position 127 is a phosphotyrosine (Tyr127). The residue at position 129 (Thr129) is a Phosphothreonine. 2 positions are modified to S-glutathionyl cysteine: Cys182 and Cys187. A substrate-binding site is contributed by 198–199; the sequence is TT. Thr216 is subject to Phosphothreonine. Residue Ser219 is modified to Phosphoserine.

This sequence belongs to the alpha-carbonic anhydrase family. It depends on Zn(2+) as a cofactor. In terms of processing, S-thiolated both by thiol-disulfide exchange with glutathione disulfide and by oxyradical-initiated S-thiolation with reduced glutathione. Post-translationally, S-glutathionylated in hepatocytes under oxidative stress. Expressed in liver and muscle.

Its subcellular location is the cytoplasm. The enzyme catalyses hydrogencarbonate + H(+) = CO2 + H2O. With respect to regulation, inhibited by acetazolamide. Reversible hydration of carbon dioxide. This Rattus norvegicus (Rat) protein is Carbonic anhydrase 3 (Ca3).